Reading from the N-terminus, the 129-residue chain is Small ribosomal subunit protein uS8my (129 aa).

It belongs to the universal ribosomal protein uS8 family. In terms of assembly, component of the mitochondrial ribosome small subunit.

Its subcellular location is the mitochondrion. The sequence is that of Small ribosomal subunit protein uS8my (RPS15AE) from Arabidopsis thaliana (Mouse-ear cress).